The following is a 1027-amino-acid chain: MASSRMYLLVKCMLILQLMVLIAKNSRALICLPCDKSKCEEPKPCTGSVVLGICGCCSVCAKQKNESCGGVYGLYGTCDRGLRCVIRPPLNGGSITQYEVGNCEDENWDDDQLLGFEPCNENLVTGCNIIDGKCECDSVRTCNNPFEFASQEACQTALQKIEEERPDCSKARCEVQFSPRCPEDSILIEGYAPPGECCPLPSRCVCSPAGCLRKVCQPGHLNILVSKSSGKPGECCDLYECKPVFSVDCSTVECPPVKPVQCPADSYETQVRLTADGCCTLPTRCECLPGLCTFPQCSAGMSPQVMSRGDGTPGRCCDVFECVNETKPACTLNGVEYHDGDMFRMDACRFCRCQGGVSVCFTAQCGVLHCERYYVPDGECCPVCEDPIYPVLSLAGCYVNGQILAHGDHWREDDCTFCQCVSGDARCVAAACGHSCLNPVTVPGECCPVCEEPTYITMAPPACGSLDNCTLLEQSCAFGFRLDPSGCRTCACKSREELCGGLMASCTLKCPFGFQTDIHGCDVCQCRPRHKKCKAVACAKDCPFGYIKNKHGCDTCRCKKCPELPCDKACPMGFQHDELGCLICQCRDQSSSSVTPAVKLGSCLSMDGRRHENGQSWHDGCRDCYCHAGREMCALISCPVPPCDNPTIRPGHCCPTCPEESSSHKPELSEASVCLAPGGEYFVEGETWNIDSCTQCTCHSGRVLCETEVCPPLLCHSPIRTQDSCCPHCPDDPVTPQTPSNDSMPSYCRNEDGDIFLAAESWKPNVCSSCVCLDGAISCFSESCPPVNCARPVLRKGQCCPYCLDATPRAVCHFNGKTYMDEERWDIDSCTHCYCLQGQTLCSTVSCPALPCHQPLTVEGSCCPMCPESYAPTNVPIEKTDQRGDKSRHQPAWPTHSENDVMPQFRGEFGSLQMPYLDGKTPLPSEDAGLHWAWVALPVLMMMLTLAALLLVNQRKQWIPVPCYRTPNKSTCLNNQLVYVDCQKGTKVQVDSSQRMLRIADPDSRYSGYYSMQKHNNLQADNFYQTA.

Positions 1-28 (MASSRMYLLVKCMLILQLMVLIAKNSRA) are cleaved as a signal peptide. The IGFBP N-terminal domain occupies 29-106 (LICLPCDKSK…QYEVGNCEDE (78 aa)). Topologically, residues 29 to 931 (LICLPCDKSK…PLPSEDAGLH (903 aa)) are extracellular. 4 disulfides stabilise this stretch: cysteine 31–cysteine 54, cysteine 34–cysteine 56, cysteine 39–cysteine 57, and cysteine 45–cysteine 60. Residue asparagine 65 is glycosylated (N-linked (GlcNAc...) asparagine). Cystine bridges form between cysteine 68–cysteine 84 and cysteine 78–cysteine 103. The Cell attachment site motif lies at 308 to 310 (RGD). Asparagine 324 carries an N-linked (GlcNAc...) asparagine glycan. VWFC domains lie at 328-385 (PACT…PVCE) and 395-451 (AGCY…PVCE). Antistasin-like domains follow at residues 463–492 (CGSL…TCAC), 499–526 (CGGL…VCQC), 533–558 (CKAV…TCRC), and 561–586 (CPEL…ICQC). N-linked (GlcNAc...) asparagine glycosylation is present at asparagine 468. VWFC domains follow at residues 601-658 (GSCL…PTCP) and 672-730 (SVCL…PHCP). The N-linked (GlcNAc...) asparagine glycan is linked to asparagine 741. 2 VWFC domains span residues 746 to 804 (SYCR…PYCL) and 810 to 867 (AVCH…PMCP). The segment at 877–897 (IEKTDQRGDKSRHQPAWPTHS) is disordered. Over residues 878–888 (EKTDQRGDKSR) the composition is skewed to basic and acidic residues. The short motif at 883-885 (RGD) is the Cell attachment site element. The helical transmembrane segment at 932–952 (WAWVALPVLMMMLTLAALLLV) threads the bilayer. Over 953 to 1027 (NQRKQWIPVP…LQADNFYQTA (75 aa)) the chain is Cytoplasmic.

The protein resides in the membrane. May play a role in CNS development by interacting with growth factors implicated in motor neuron differentiation and survival. In Danio rerio (Zebrafish), this protein is Cysteine-rich motor neuron 1 protein (crim1).